The following is a 104-amino-acid chain: Integration host factor subunit alpha (104 aa).

It belongs to the bacterial histone-like protein family. In terms of assembly, heterodimer of an alpha and a beta chain.

In terms of biological role, this protein is one of the two subunits of integration host factor, a specific DNA-binding protein that functions in genetic recombination as well as in transcriptional and translational control. The sequence is that of Integration host factor subunit alpha from Buchnera aphidicola subsp. Cinara cedri (strain Cc).